The chain runs to 536 residues: MFS-type efflux pump MFS1 (536 aa).

Helical transmembrane passes span 30 to 50 (VTGL…LLVA), 80 to 100 (YLLT…FFPV), and 102 to 122 (WVFL…GAAP). Asparagine 123 carries an N-linked (GlcNAc...) asparagine glycan. Transmembrane regions (helical) follow at residues 133–153 (VAGI…AYSI), 163–183 (GAIG…GGAF), and 191–211 (WCFY…LIFL). N-linked (GlcNAc...) asparagine glycosylation occurs at asparagine 221. 8 helical membrane passes run 234-254 (IGTA…QWGG), 264-284 (IIAL…FQIR), 306-326 (FFLF…PIWF), 342-362 (IPMV…VTAI), 366-386 (APLY…LTTF), 400-420 (IIFG…AQAV), 426-446 (VAVG…LFVS), and 503-523 (TWYV…GMEW).

Belongs to the major facilitator superfamily. TCR/Tet family.

The protein localises to the cell membrane. MFS-type efflux pump involved in the modulation susceptibility to azoles, including fluconazole, itraconazole, miconazole and voriconazole. Also confers increased resistance chloramphenicol and thiamphenicol, suggesting that it acts as a pleiotropic drug transporter with a broad substrate spectrum. Finally, increases the tolerance to cycloheximide when expressed in S.cerevisiae, but not in dermatophyte species. This chain is MFS-type efflux pump MFS1, found in Arthroderma benhamiae (strain ATCC MYA-4681 / CBS 112371) (Trichophyton mentagrophytes).